A 72-amino-acid polypeptide reads, in one-letter code: Conotoxin 3 (72 aa).

A signal peptide spans 1 to 22 (MKLTCVVIVAVLLLTACQLITA). Residues 23–46 (DDSRGTQEHRALRSDTKLSMLTLR) constitute a propeptide that is removed on maturation. Disulfide bonds link Cys-47-Cys-61, Cys-54-Cys-64, and Cys-60-Cys-71.

It belongs to the conotoxin O1 superfamily. As to expression, expressed by the venom duct.

The protein resides in the secreted. This chain is Conotoxin 3, found in Conus striatus (Striated cone).